A 369-amino-acid chain; its full sequence is Lipoyl synthase, mitochondrial (369 aa).

The N-terminal 32 residues, 1–32, are a transit peptide targeting the mitochondrion; sequence MLTKGVRALAWSPRRYITLDAEAAKPVVAKRR. Positions 106, 111, 117, 136, 140, 143, and 351 each coordinate [4Fe-4S] cluster. Residues 121 to 340 form the Radical SAM core domain; it reads NKGSATATIM…KEKALELGFL (220 aa).

Belongs to the radical SAM superfamily. Lipoyl synthase family. It depends on [4Fe-4S] cluster as a cofactor.

The protein localises to the mitochondrion. It catalyses the reaction [[Fe-S] cluster scaffold protein carrying a second [4Fe-4S](2+) cluster] + N(6)-octanoyl-L-lysyl-[protein] + 2 oxidized [2Fe-2S]-[ferredoxin] + 2 S-adenosyl-L-methionine + 4 H(+) = [[Fe-S] cluster scaffold protein] + N(6)-[(R)-dihydrolipoyl]-L-lysyl-[protein] + 4 Fe(3+) + 2 hydrogen sulfide + 2 5'-deoxyadenosine + 2 L-methionine + 2 reduced [2Fe-2S]-[ferredoxin]. The protein operates within protein modification; protein lipoylation via endogenous pathway; protein N(6)-(lipoyl)lysine from octanoyl-[acyl-carrier-protein]: step 2/2. Its function is as follows. Catalyzes the radical-mediated insertion of two sulfur atoms into the C-6 and C-8 positions of the octanoyl moiety bound to the lipoyl domains of lipoate-dependent enzymes, thereby converting the octanoylated domains into lipoylated derivatives. The protein is Lipoyl synthase, mitochondrial of Eremothecium gossypii (strain ATCC 10895 / CBS 109.51 / FGSC 9923 / NRRL Y-1056) (Yeast).